Consider the following 473-residue polypeptide: 3-isopropylmalate dehydratase large subunit 2 (473 aa).

Positions 350, 410, and 413 each coordinate [4Fe-4S] cluster.

It belongs to the aconitase/IPM isomerase family. LeuC type 1 subfamily. In terms of assembly, heterodimer of LeuC and LeuD. The cofactor is [4Fe-4S] cluster.

The catalysed reaction is (2R,3S)-3-isopropylmalate = (2S)-2-isopropylmalate. The protein operates within amino-acid biosynthesis; L-leucine biosynthesis; L-leucine from 3-methyl-2-oxobutanoate: step 2/4. Catalyzes the isomerization between 2-isopropylmalate and 3-isopropylmalate, via the formation of 2-isopropylmaleate. The polypeptide is 3-isopropylmalate dehydratase large subunit 2 (Salmonella choleraesuis (strain SC-B67)).